Reading from the N-terminus, the 372-residue chain is MSATREREDGQDYRRIFLQDIPLIDVRAPVEFQQGAFANAVNLPLMNDDERQAVGTCYKQQGQQAAIALGHSLVNGRLREQRTAAWLAQCAQWPEGYIYCFRGGLRSQLVQQWLREAGVAYPRITGGYKALRNFLLTTLEQSAELPMVLIGGNTGSGKTLLVNELADGVDLEGAAHHRGSSFGRTLVSQSGQIDFENRLAVLLLKKQHGGCRRWVLEDEGRIIGSNNLPLPVFNRMQQAPVAVIDDPFEVRLARLQHEYIDRMRIEFEQAYGAQLGWQKYDEYLHHGLFAIRRRLGLERFQLLTQHLERALQYQQASGNSDEHQQWLVPLLQHYYDPMYHYQLEKKSQRIVFRGNYAEVREFLMTYSQNNGE.

A Rhodanese domain is found at Phe-17–Glu-140. Cys-100 acts as the S-selanylcysteine intermediate in catalysis.

This sequence belongs to the SelU family. As to quaternary structure, monomer.

It carries out the reaction 5-methylaminomethyl-2-thiouridine(34) in tRNA + selenophosphate + (2E)-geranyl diphosphate + H2O + H(+) = 5-methylaminomethyl-2-selenouridine(34) in tRNA + (2E)-thiogeraniol + phosphate + diphosphate. The enzyme catalyses 5-methylaminomethyl-2-thiouridine(34) in tRNA + (2E)-geranyl diphosphate = 5-methylaminomethyl-S-(2E)-geranyl-thiouridine(34) in tRNA + diphosphate. It catalyses the reaction 5-methylaminomethyl-S-(2E)-geranyl-thiouridine(34) in tRNA + selenophosphate + H(+) = 5-methylaminomethyl-2-(Se-phospho)selenouridine(34) in tRNA + (2E)-thiogeraniol. The catalysed reaction is 5-methylaminomethyl-2-(Se-phospho)selenouridine(34) in tRNA + H2O = 5-methylaminomethyl-2-selenouridine(34) in tRNA + phosphate. Its function is as follows. Involved in the post-transcriptional modification of the uridine at the wobble position (U34) of tRNA(Lys), tRNA(Glu) and tRNA(Gln). Catalyzes the conversion of 2-thiouridine (S2U-RNA) to 2-selenouridine (Se2U-RNA). Acts in a two-step process involving geranylation of 2-thiouridine (S2U) to S-geranyl-2-thiouridine (geS2U) and subsequent selenation of the latter derivative to 2-selenouridine (Se2U) in the tRNA chain. The polypeptide is tRNA 2-selenouridine synthase (Serratia proteamaculans (strain 568)).